We begin with the raw amino-acid sequence, 258 residues long: Sugar fermentation stimulation protein homolog (258 aa).

The protein belongs to the SfsA family.

The polypeptide is Sugar fermentation stimulation protein homolog (Prochlorococcus marinus (strain NATL2A)).